We begin with the raw amino-acid sequence, 505 residues long: Ribose import ATP-binding protein RbsA (505 aa).

ABC transporter domains follow at residues 12–249 and 259–504; these read LQMK…VGRK and VKKG…VAFS. ATP is bound at residue 44–51; it reads GENGAGKS.

The protein belongs to the ABC transporter superfamily. Ribose importer (TC 3.A.1.2.1) family. The complex is composed of an ATP-binding protein (RbsA), two transmembrane proteins (RbsC) and a solute-binding protein (RbsB).

The protein localises to the cell membrane. It carries out the reaction D-ribose(out) + ATP + H2O = D-ribose(in) + ADP + phosphate + H(+). Functionally, part of the ABC transporter complex RbsABC involved in ribose import. Responsible for energy coupling to the transport system. This chain is Ribose import ATP-binding protein RbsA, found in Clostridium tetani (strain Massachusetts / E88).